Consider the following 284-residue polypeptide: Bifunctional protein FolD 2 (284 aa).

NADP(+) contacts are provided by residues 164 to 166 (GRG), S189, and I230.

The protein belongs to the tetrahydrofolate dehydrogenase/cyclohydrolase family. Homodimer.

It carries out the reaction (6R)-5,10-methylene-5,6,7,8-tetrahydrofolate + NADP(+) = (6R)-5,10-methenyltetrahydrofolate + NADPH. It catalyses the reaction (6R)-5,10-methenyltetrahydrofolate + H2O = (6R)-10-formyltetrahydrofolate + H(+). The protein operates within one-carbon metabolism; tetrahydrofolate interconversion. Functionally, catalyzes the oxidation of 5,10-methylenetetrahydrofolate to 5,10-methenyltetrahydrofolate and then the hydrolysis of 5,10-methenyltetrahydrofolate to 10-formyltetrahydrofolate. The chain is Bifunctional protein FolD 2 from Desulfitobacterium hafniense (strain Y51).